Consider the following 362-residue polypeptide: Biotin synthase (362 aa).

In terms of domain architecture, Radical SAM core spans 39 to 267 (NVVQVSTLLS…ETQVRLSAGR (229 aa)). The [4Fe-4S] cluster site is built by Cys54, Cys58, and Cys61. The [2Fe-2S] cluster site is built by Cys98, Cys130, Cys190, and Arg262. Residues 317-362 (PFTKVSQPTTVEAKDSRYESLGEKPKWSRPSHTIEKNLELSGKGKN) form a disordered region. Residues 328–354 (EAKDSRYESLGEKPKWSRPSHTIEKNL) are compositionally biased toward basic and acidic residues.

Belongs to the radical SAM superfamily. Biotin synthase family. In terms of assembly, homodimer. The cofactor is [4Fe-4S] cluster. Requires [2Fe-2S] cluster as cofactor.

The catalysed reaction is (4R,5S)-dethiobiotin + (sulfur carrier)-SH + 2 reduced [2Fe-2S]-[ferredoxin] + 2 S-adenosyl-L-methionine = (sulfur carrier)-H + biotin + 2 5'-deoxyadenosine + 2 L-methionine + 2 oxidized [2Fe-2S]-[ferredoxin]. Its pathway is cofactor biosynthesis; biotin biosynthesis; biotin from 7,8-diaminononanoate: step 2/2. Catalyzes the conversion of dethiobiotin (DTB) to biotin by the insertion of a sulfur atom into dethiobiotin via a radical-based mechanism. This is Biotin synthase from Flavobacterium psychrophilum (strain ATCC 49511 / DSM 21280 / CIP 103535 / JIP02/86).